A 493-amino-acid chain; its full sequence is Glutamyl-tRNA(Gln) amidotransferase subunit A (493 aa).

Catalysis depends on charge relay system residues lysine 78 and serine 158. Catalysis depends on serine 182, which acts as the Acyl-ester intermediate.

It belongs to the amidase family. GatA subfamily. Heterotrimer of A, B and C subunits.

The enzyme catalyses L-glutamyl-tRNA(Gln) + L-glutamine + ATP + H2O = L-glutaminyl-tRNA(Gln) + L-glutamate + ADP + phosphate + H(+). Allows the formation of correctly charged Gln-tRNA(Gln) through the transamidation of misacylated Glu-tRNA(Gln) in organisms which lack glutaminyl-tRNA synthetase. The reaction takes place in the presence of glutamine and ATP through an activated gamma-phospho-Glu-tRNA(Gln). The protein is Glutamyl-tRNA(Gln) amidotransferase subunit A of Rickettsia bellii (strain RML369-C).